We begin with the raw amino-acid sequence, 799 residues long: ATP synthase subunit alpha (799 aa).

The interval 1–549 is ATP synthase alpha chain; sequence MTDNKNHSLI…EEVSLKPTTE (549 aa). 170 to 177 contacts ATP; that stretch reads GDRQTGKT. The tract at residues 550-799 is unknown; the sequence is TSEAVQIEEK…KGPSGFTYLK (250 aa).

The protein belongs to the ATPase alpha/beta chains family. F-type ATPases have 2 components, CF(1) - the catalytic core - and CF(0) - the membrane proton channel. CF(1) has five subunits: alpha(3), beta(3), gamma(1), delta(1), epsilon(1). CF(0) has three main subunits: a(1), b(2) and c(9-12). The alpha and beta chains form an alternating ring which encloses part of the gamma chain. CF(1) is attached to CF(0) by a central stalk formed by the gamma and epsilon chains, while a peripheral stalk is formed by the delta and b chains.

The protein resides in the cell membrane. It carries out the reaction ATP + H2O + 4 H(+)(in) = ADP + phosphate + 5 H(+)(out). Its function is as follows. Produces ATP from ADP in the presence of a proton gradient across the membrane. The alpha chain is a regulatory subunit. The sequence is that of ATP synthase subunit alpha (atpA) from Ureaplasma parvum serovar 3 (strain ATCC 27815 / 27 / NCTC 11736).